Here is a 189-residue protein sequence, read N- to C-terminus: dCTP deaminase (189 aa).

Residues 112-117, 136-138, Gln-157, Tyr-171, and Gln-181 each bind dCTP; these read KSTYAR and TLE. The active-site Proton donor/acceptor is the Glu-138.

It belongs to the dCTP deaminase family. As to quaternary structure, homotrimer.

It catalyses the reaction dCTP + H2O + H(+) = dUTP + NH4(+). It functions in the pathway pyrimidine metabolism; dUMP biosynthesis; dUMP from dCTP (dUTP route): step 1/2. Functionally, catalyzes the deamination of dCTP to dUTP. The polypeptide is dCTP deaminase (Teredinibacter turnerae (strain ATCC 39867 / T7901)).